The chain runs to 401 residues: Probable tRNA sulfurtransferase (401 aa).

A THUMP domain is found at 60 to 165 (EPIIDKLKNV…QEGTYITCHD (106 aa)). ATP-binding positions include 183 to 184 (ML), 208 to 209 (HF), arginine 265, glycine 287, and glutamine 296.

Belongs to the ThiI family.

Its subcellular location is the cytoplasm. It catalyses the reaction [ThiI sulfur-carrier protein]-S-sulfanyl-L-cysteine + a uridine in tRNA + 2 reduced [2Fe-2S]-[ferredoxin] + ATP + H(+) = [ThiI sulfur-carrier protein]-L-cysteine + a 4-thiouridine in tRNA + 2 oxidized [2Fe-2S]-[ferredoxin] + AMP + diphosphate. It carries out the reaction [ThiS sulfur-carrier protein]-C-terminal Gly-Gly-AMP + S-sulfanyl-L-cysteinyl-[cysteine desulfurase] + AH2 = [ThiS sulfur-carrier protein]-C-terminal-Gly-aminoethanethioate + L-cysteinyl-[cysteine desulfurase] + A + AMP + 2 H(+). It functions in the pathway cofactor biosynthesis; thiamine diphosphate biosynthesis. Catalyzes the ATP-dependent transfer of a sulfur to tRNA to produce 4-thiouridine in position 8 of tRNAs, which functions as a near-UV photosensor. Also catalyzes the transfer of sulfur to the sulfur carrier protein ThiS, forming ThiS-thiocarboxylate. This is a step in the synthesis of thiazole, in the thiamine biosynthesis pathway. The sulfur is donated as persulfide by IscS. In Geobacillus sp. (strain WCH70), this protein is Probable tRNA sulfurtransferase.